Consider the following 354-residue polypeptide: Protein RecA (354 aa).

An ATP-binding site is contributed by G67–T74.

The protein belongs to the RecA family.

It localises to the cytoplasm. Can catalyze the hydrolysis of ATP in the presence of single-stranded DNA, the ATP-dependent uptake of single-stranded DNA by duplex DNA, and the ATP-dependent hybridization of homologous single-stranded DNAs. It interacts with LexA causing its activation and leading to its autocatalytic cleavage. The protein is Protein RecA of Serratia marcescens.